A 117-amino-acid chain; its full sequence is Large ribosomal subunit protein bL20 (117 aa).

This sequence belongs to the bacterial ribosomal protein bL20 family.

Binds directly to 23S ribosomal RNA and is necessary for the in vitro assembly process of the 50S ribosomal subunit. It is not involved in the protein synthesizing functions of that subunit. This Actinobacillus pleuropneumoniae serotype 7 (strain AP76) protein is Large ribosomal subunit protein bL20.